Here is a 59-residue protein sequence, read N- to C-terminus: Cecropin-A2 (59 aa).

The first 23 residues, 1–23, serve as a signal peptide directing secretion; it reads MNFNKLFAIVLLAALVLLGQTEA.

The protein belongs to the cecropin family.

The protein localises to the secreted. Cecropins have lytic and antibacterial activity against several Gram-positive and Gram-negative bacteria. The protein is Cecropin-A2 (CECA2) of Aedes albopictus (Asian tiger mosquito).